Here is a 1119-residue protein sequence, read N- to C-terminus: Isoleucine--tRNA ligase (1119 aa).

The tract at residues 1–43 (MVPRRSRQRPASSCRTAKTARREMPYPLPAPDGQEPEAQPVTP) is disordered. The 'HIGH' region signature appears at 84-94 (PFANGLPHYGH). A 'KMSKS' region motif is present at residues 676 to 680 (KVSKS). Residue K679 coordinates ATP.

Belongs to the class-I aminoacyl-tRNA synthetase family. IleS type 2 subfamily. As to quaternary structure, monomer. It depends on Zn(2+) as a cofactor.

It localises to the cytoplasm. The catalysed reaction is tRNA(Ile) + L-isoleucine + ATP = L-isoleucyl-tRNA(Ile) + AMP + diphosphate. Catalyzes the attachment of isoleucine to tRNA(Ile). As IleRS can inadvertently accommodate and process structurally similar amino acids such as valine, to avoid such errors it has two additional distinct tRNA(Ile)-dependent editing activities. One activity is designated as 'pretransfer' editing and involves the hydrolysis of activated Val-AMP. The other activity is designated 'posttransfer' editing and involves deacylation of mischarged Val-tRNA(Ile). This Leifsonia xyli subsp. xyli (strain CTCB07) protein is Isoleucine--tRNA ligase.